The chain runs to 157 residues: SsrA-binding protein (157 aa).

Belongs to the SmpB family.

It localises to the cytoplasm. Functionally, required for rescue of stalled ribosomes mediated by trans-translation. Binds to transfer-messenger RNA (tmRNA), required for stable association of tmRNA with ribosomes. tmRNA and SmpB together mimic tRNA shape, replacing the anticodon stem-loop with SmpB. tmRNA is encoded by the ssrA gene; the 2 termini fold to resemble tRNA(Ala) and it encodes a 'tag peptide', a short internal open reading frame. During trans-translation Ala-aminoacylated tmRNA acts like a tRNA, entering the A-site of stalled ribosomes, displacing the stalled mRNA. The ribosome then switches to translate the ORF on the tmRNA; the nascent peptide is terminated with the 'tag peptide' encoded by the tmRNA and targeted for degradation. The ribosome is freed to recommence translation, which seems to be the essential function of trans-translation. In Chlorobium phaeovibrioides (strain DSM 265 / 1930) (Prosthecochloris vibrioformis (strain DSM 265)), this protein is SsrA-binding protein.